Reading from the N-terminus, the 506-residue chain is Cysteine--tRNA ligase (506 aa).

Cys-43 is a Zn(2+) binding site. The 'HIGH' region signature appears at 45–55 (VTVYDLCHLGH). Zn(2+) contacts are provided by Cys-237, His-262, and Glu-266. The 'KMSKS' region signature appears at 294-298 (KMSKS). An ATP-binding site is contributed by Lys-297.

It belongs to the class-I aminoacyl-tRNA synthetase family. Monomer. It depends on Zn(2+) as a cofactor.

Its subcellular location is the cytoplasm. It carries out the reaction tRNA(Cys) + L-cysteine + ATP = L-cysteinyl-tRNA(Cys) + AMP + diphosphate. The chain is Cysteine--tRNA ligase from Synechococcus sp. (strain JA-3-3Ab) (Cyanobacteria bacterium Yellowstone A-Prime).